The following is a 35-amino-acid chain: Photosystem II reaction center protein T (35 aa).

Residues 3 to 23 (ALVYTFLLVSTLGIIFFAIFF) form a helical membrane-spanning segment.

The protein belongs to the PsbT family. In terms of assembly, PSII is composed of 1 copy each of membrane proteins PsbA, PsbB, PsbC, PsbD, PsbE, PsbF, PsbH, PsbI, PsbJ, PsbK, PsbL, PsbM, PsbT, PsbY, PsbZ, Psb30/Ycf12, at least 3 peripheral proteins of the oxygen-evolving complex and a large number of cofactors. It forms dimeric complexes.

Its subcellular location is the plastid. The protein localises to the chloroplast thylakoid membrane. Functionally, found at the monomer-monomer interface of the photosystem II (PS II) dimer, plays a role in assembly and dimerization of PSII. PSII is a light-driven water plastoquinone oxidoreductase, using light energy to abstract electrons from H(2)O, generating a proton gradient subsequently used for ATP formation. The polypeptide is Photosystem II reaction center protein T (Stangeria eriopus (Natal grass cycad)).